The chain runs to 515 residues: SWI/SNF-related matrix-associated actin-dependent regulator of chromatin subfamily D member 1 (515 aa).

The tract at residues Met-1–Met-128 is disordered. Over residues Gly-14–Gly-23 the composition is skewed to gly residues. The tract at residues Ala-43–Asp-167 is interaction with ESR1, NR1H4, NR3C1, PGR and SMARCA4. Residues Arg-68 and Arg-88 each carry the asymmetric dimethylarginine modification. Lys-101 is covalently cross-linked (Glycyl lysine isopeptide (Lys-Gly) (interchain with G-Cter in SUMO2)). The span at Pro-103–Gln-117 shows a compositional bias: low complexity. The interval Ile-168–Glu-474 is interaction with SMARCC1 and SMARCC2. The interval Arg-180–Thr-515 is necessary for GR/NR3C1-mediated remodeling and transcription from chromatin; required for GR/NR3C1 interaction with the BRG1/SMARCA4 complex in vivo. Residue Thr-203 is modified to Phosphothreonine. Lys-223 carries the post-translational modification N6-acetyllysine. Residues Tyr-290–Pro-367 form the SWIB/MDM2 domain. The stretch at Ala-412 to Phe-440 forms a coiled coil.

It belongs to the SMARCD family. Component of the multiprotein chromatin-remodeling complexes SWI/SNF: SWI/SNF-A (BAF), SWI/SNF-B (PBAF) and related complexes. The canonical complex contains a catalytic subunit (either SMARCA4/BRG1/BAF190A or SMARCA2/BRM/BAF190B), and at least SMARCE1, ACTL6A/BAF53, SMARCC1/BAF155, SMARCC2/BAF170, and SMARCB1/SNF5/BAF47. Other subunits specific to each of the complexes may also be present permitting several possible combinations developmentally and tissue specific. Component of the BAF complex, which includes at least actin (ACTB), ARID1A/BAF250A, ARID1B/BAF250B, SMARCA2/BRM, SMARCA4/BRG1/BAF190A, ACTL6A/BAF53, ACTL6B/BAF53B, SMARCE1/BAF57, SMARCC1/BAF155, SMARCC2/BAF170, SMARCB1/SNF5/INI1, and one or more SMARCD1/BAF60A, SMARCD2/BAF60B, or SMARCD3/BAF60C. In muscle cells, the BAF complex also contains DPF3. Component of neural progenitors-specific chromatin remodeling complex (npBAF complex) composed of at least, ARID1A/BAF250A or ARID1B/BAF250B, SMARCD1/BAF60A, SMARCD3/BAF60C, SMARCA2/BRM/BAF190B, SMARCA4/BRG1/BAF190A, SMARCB1/BAF47, SMARCC1/BAF155, SMARCE1/BAF57, SMARCC2/BAF170, PHF10/BAF45A, ACTL6A/BAF53A and actin. Component of neuron-specific chromatin remodeling complex (nBAF complex) composed of at least, ARID1A/BAF250A or ARID1B/BAF250B, SMARCD1/BAF60A, SMARCD3/BAF60C, SMARCA2/BRM/BAF190B, SMARCA4/BRG1/BAF190A, SMARCB1/BAF47, SMARCC1/BAF155, SMARCE1/BAF57, SMARCC2/BAF170, DPF1/BAF45B, DPF3/BAF45C, ACTL6B/BAF53B and actin. Component of the SWI/SNF-B (PBAF) chromatin remodeling complex, at least composed of SMARCA4/BRG1, SMARCB1/BAF47/SNF5, ACTL6A/BAF53A or ACTL6B/BAF53B, SMARCE1/BAF57, SMARCD1/BAF60A, SMARCD2/BAF60B, perhaps SMARCD3/BAF60C, SMARCC1/BAF155, SMARCC2/BAF170, PBRM1/BAF180, ARID2/BAF200 and actin (ACTB). Component of SWI/SNF (GBAF) subcomplex, which includes at least BICRA or BICRAL (mutually exclusive), BRD9, SS18, SMARCA2/BRM, SMARCA4/BRG1/BAF190A, ACTL6A/BAF53, SMARCC1/BAF155, and SMARCD1/BAF60A. Specifically interacts with the VDR heterodimer complex. Interacts with ESR1, NR3C1, NR1H4, PGR, SMARCA4, SMARCC1 and SMARCC2. Interacts with DPF2. Interacts with FOS, FOSB, FOSL1 and FOSL2.

Its subcellular location is the nucleus. In terms of biological role, involved in transcriptional activation and repression of select genes by chromatin remodeling (alteration of DNA-nucleosome topology). Component of SWI/SNF chromatin remodeling complexes that carry out key enzymatic activities, changing chromatin structure by altering DNA-histone contacts within a nucleosome in an ATP-dependent manner. Belongs to the neural progenitors-specific chromatin remodeling complex (npBAF complex) and the neuron-specific chromatin remodeling complex (nBAF complex). During neural development a switch from a stem/progenitor to a postmitotic chromatin remodeling mechanism occurs as neurons exit the cell cycle and become committed to their adult state. The transition from proliferating neural stem/progenitor cells to postmitotic neurons requires a switch in subunit composition of the npBAF and nBAF complexes. As neural progenitors exit mitosis and differentiate into neurons, npBAF complexes which contain ACTL6A/BAF53A and PHF10/BAF45A, are exchanged for homologous alternative ACTL6B/BAF53B and DPF1/BAF45B or DPF3/BAF45C subunits in neuron-specific complexes (nBAF). The npBAF complex is essential for the self-renewal/proliferative capacity of the multipotent neural stem cells. The nBAF complex along with CREST plays a role regulating the activity of genes essential for dendrite growth. Has a strong influence on vitamin D-mediated transcriptional activity from an enhancer vitamin D receptor element (VDRE). May be a link between mammalian SWI-SNF-like chromatin remodeling complexes and the vitamin D receptor (VDR) heterodimer. Mediates critical interactions between nuclear receptors and the BRG1/SMARCA4 chromatin-remodeling complex for transactivation. Interacts with AKIRIN2. This chain is SWI/SNF-related matrix-associated actin-dependent regulator of chromatin subfamily D member 1 (SMARCD1), found in Bos taurus (Bovine).